A 483-amino-acid chain; its full sequence is Glutamyl-tRNA(Gln) amidotransferase subunit A (483 aa).

Active-site charge relay system residues include lysine 76 and serine 151. The active-site Acyl-ester intermediate is the serine 175.

The protein belongs to the amidase family. GatA subfamily. As to quaternary structure, heterotrimer of A, B and C subunits.

The catalysed reaction is L-glutamyl-tRNA(Gln) + L-glutamine + ATP + H2O = L-glutaminyl-tRNA(Gln) + L-glutamate + ADP + phosphate + H(+). Allows the formation of correctly charged Gln-tRNA(Gln) through the transamidation of misacylated Glu-tRNA(Gln) in organisms which lack glutaminyl-tRNA synthetase. The reaction takes place in the presence of glutamine and ATP through an activated gamma-phospho-Glu-tRNA(Gln). This is Glutamyl-tRNA(Gln) amidotransferase subunit A from Pseudomonas putida (strain W619).